Reading from the N-terminus, the 243-residue chain is Venom nerve growth factor 1 (243 aa).

The first 18 residues, 1–18 (MSMLCYTLIIAFLIGIWA), serve as a signal peptide directing secretion. Residues 19–125 (APKSEDNVPL…TLNRNIRAKR (107 aa)) constitute a propeptide that is removed on maturation. Residues 47-66 (GLKTSRNTDQRHPAPKKAED) show a composition bias toward basic and acidic residues. A disordered region spans residues 47-69 (GLKTSRNTDQRHPAPKKAEDQEL). 3 disulfides stabilise this stretch: Cys-139/Cys-204, Cys-182/Cys-232, and Cys-192/Cys-234. Asn-148 carries an N-linked (GlcNAc...) asparagine glycan.

Belongs to the NGF-beta family. Homodimer; non-covalently linked. In terms of tissue distribution, expressed by the venom gland.

Its subcellular location is the secreted. Nerve growth factor is important for the development and maintenance of the sympathetic and sensory nervous systems. It stimulates division and differentiation of sympathetic and embryonic sensory neurons as well as basal forebrain cholinergic neurons in the brain. Its relevance in the snake venom is not clear. However, it has been shown to inhibit metalloproteinase-dependent proteolysis of platelet glycoprotein Ib alpha, suggesting a metalloproteinase inhibition to prevent metalloprotease autodigestion and/or protection against prey proteases. Binds a lipid between the two protein chains in the homodimer. The lipid-bound form promotes histamine relase from mouse mast cells, contrary to the lipid-free form. This is Venom nerve growth factor 1 from Oxyuranus microlepidotus (Inland taipan).